The chain runs to 290 residues: Small ribosomal subunit biogenesis GTPase RsgA (290 aa).

Residues 62–213 (KNSLVRPPIV…IADTPGFSSL (152 aa)) form the CP-type G domain. Residues 111-114 (SKTD) and 156-164 (GQTGVGKTT) contribute to the GTP site. Cys-237, Cys-242, His-244, and Cys-250 together coordinate Zn(2+).

Belongs to the TRAFAC class YlqF/YawG GTPase family. RsgA subfamily. As to quaternary structure, monomer. Associates with 30S ribosomal subunit, binds 16S rRNA. The cofactor is Zn(2+).

It is found in the cytoplasm. Its function is as follows. One of several proteins that assist in the late maturation steps of the functional core of the 30S ribosomal subunit. Helps release RbfA from mature subunits. May play a role in the assembly of ribosomal proteins into the subunit. Circularly permuted GTPase that catalyzes slow GTP hydrolysis, GTPase activity is stimulated by the 30S ribosomal subunit. In Streptococcus mutans serotype c (strain ATCC 700610 / UA159), this protein is Small ribosomal subunit biogenesis GTPase RsgA.